A 152-amino-acid polypeptide reads, in one-letter code: Nucleoside diphosphate kinase (152 aa).

Lys11, Phe59, Arg87, Thr93, Arg104, and Asn114 together coordinate ATP. The active-site Pros-phosphohistidine intermediate is His117.

It belongs to the NDK family. As to quaternary structure, homotetramer. Mg(2+) is required as a cofactor.

The protein localises to the cytoplasm. It carries out the reaction dZDP + ATP = dZTP + ADP. The enzyme catalyses a 2'-deoxyribonucleoside 5'-diphosphate + ATP = a 2'-deoxyribonucleoside 5'-triphosphate + ADP. The catalysed reaction is a ribonucleoside 5'-diphosphate + ATP = a ribonucleoside 5'-triphosphate + ADP. Its pathway is purine metabolism. In terms of biological role, major role in the synthesis of nucleoside triphosphates other than ATP. The ATP gamma phosphate is transferred to the NDP beta phosphate via a ping-pong mechanism, using a phosphorylated active-site intermediate. Functionally, (Microbial infection) Catalyzes the phosphorylation of dZDP to dZTP, when the bacterium is infected by a phage that produces the substrate for the synthesis of dZTP (2- amino-2'-deoxyadenosine 5'-triphosphate), which is then used by the phage as a DNA polymerase substrate. In Synechococcus sp. (strain WH7803), this protein is Nucleoside diphosphate kinase.